The sequence spans 314 residues: L-lactate dehydrogenase 2 (314 aa).

NAD(+) contacts are provided by residues Val-16, Asp-37, Lys-42, Tyr-68, and 82 to 83 (GL). Residues Gln-85, Arg-91, and 123-126 (NPVD) contribute to the substrate site. NAD(+) is bound by residues 121–123 (ATN) and Ser-146. 151–154 (DSAR) contacts substrate. Positions 156 and 171 each coordinate beta-D-fructose 1,6-bisphosphate. His-178 serves as the catalytic Proton acceptor. Tyr-223 is modified (phosphotyrosine). Thr-232 is a substrate binding site.

This sequence belongs to the LDH/MDH superfamily. LDH family. In terms of assembly, homotetramer.

Its subcellular location is the cytoplasm. It carries out the reaction (S)-lactate + NAD(+) = pyruvate + NADH + H(+). It functions in the pathway fermentation; pyruvate fermentation to lactate; (S)-lactate from pyruvate: step 1/1. With respect to regulation, allosterically activated by fructose 1,6-bisphosphate (FBP). Its function is as follows. Catalyzes the conversion of lactate to pyruvate. This is L-lactate dehydrogenase 2 from Bacillus cereus (strain ATCC 10987 / NRS 248).